Here is a 105-residue protein sequence, read N- to C-terminus: Late embryogenesis abundant protein Lea5-A (105 aa).

This sequence belongs to the LEA type 3 family.

This chain is Late embryogenesis abundant protein Lea5-A (LEA5-A), found in Gossypium hirsutum (Upland cotton).